Here is a 459-residue protein sequence, read N- to C-terminus: uncharacterized protein (459 aa).

The TRAM domain occupies 2-60; the sequence is NLRVKQKIPLKIKRMGINGEGIGFYKRTLVFVPGALKGEEIFCQITSVKHNFVQARLLT. Residues cysteine 73, cysteine 79, cysteine 82, and cysteine 162 each contribute to the [4Fe-4S] cluster site. Residues glutamine 284, tyrosine 313, aspartate 334, and aspartate 382 each contribute to the S-adenosyl-L-methionine site. Cysteine 409 acts as the Nucleophile in catalysis.

This sequence belongs to the class I-like SAM-binding methyltransferase superfamily. RNA M5U methyltransferase family.

This is an uncharacterized protein from Streptococcus mutans serotype c (strain ATCC 700610 / UA159).